The chain runs to 83 residues: Defensin-like protein 47 (83 aa).

The first 27 residues, 1 to 27 (MGSTKTLVTCFLVIILAVSLPNNNVLA), serve as a signal peptide directing secretion. 4 disulfide bridges follow: cysteine 40–cysteine 81, cysteine 44–cysteine 68, cysteine 53–cysteine 79, and cysteine 57–cysteine 80.

This sequence belongs to the DEFL family.

The protein localises to the secreted. The protein is Defensin-like protein 47 of Arabidopsis thaliana (Mouse-ear cress).